We begin with the raw amino-acid sequence, 269 residues long: Tryptophan synthase alpha chain (269 aa).

Active-site proton acceptor residues include E50 and D61.

Belongs to the TrpA family. As to quaternary structure, tetramer of two alpha and two beta chains.

It carries out the reaction (1S,2R)-1-C-(indol-3-yl)glycerol 3-phosphate + L-serine = D-glyceraldehyde 3-phosphate + L-tryptophan + H2O. It functions in the pathway amino-acid biosynthesis; L-tryptophan biosynthesis; L-tryptophan from chorismate: step 5/5. In terms of biological role, the alpha subunit is responsible for the aldol cleavage of indoleglycerol phosphate to indole and glyceraldehyde 3-phosphate. This is Tryptophan synthase alpha chain from Buchnera aphidicola subsp. Baizongia pistaciae (strain Bp).